The primary structure comprises 875 residues: uncharacterized protein (875 aa).

The tract at residues 83 to 149 (PFQPPPPQPF…QPPQPPPQQL (67 aa)) is disordered. Over residues 101-147 (QQPPQPPPDQPQQPQPPQQPPQQPPQQQPQPPQPPQQPPQPPQPPPQ) the composition is skewed to pro residues.

This is an uncharacterized protein from Orgyia pseudotsugata multicapsid polyhedrosis virus (OpMNPV).